The sequence spans 304 residues: UDP-N-acetylenolpyruvoylglucosamine reductase (304 aa).

One can recognise an FAD-binding PCMH-type domain in the interval 34 to 198; that stretch reads IGGKADFLVW…LEVVFALRPG (165 aa). Arg-177 is an active-site residue. Ser-227 (proton donor) is an active-site residue. Glu-297 is an active-site residue.

The protein belongs to the MurB family. Requires FAD as cofactor.

It is found in the cytoplasm. The enzyme catalyses UDP-N-acetyl-alpha-D-muramate + NADP(+) = UDP-N-acetyl-3-O-(1-carboxyvinyl)-alpha-D-glucosamine + NADPH + H(+). It participates in cell wall biogenesis; peptidoglycan biosynthesis. Functionally, cell wall formation. The polypeptide is UDP-N-acetylenolpyruvoylglucosamine reductase (Geobacillus kaustophilus (strain HTA426)).